The following is a 392-amino-acid chain: MKFSQASLLAACLPAISARFIETAEADNVILKPDELYLIETAPGKTQWVTEDQKWELRRNGQRFMDITDTPSLGSTRLNAQTVSFPKKCVKQDEVADLSKNLEKKNMKANLEKLTSFHTRYYKSNYGLESSDWVLEKVNQIIKDAGAQDTVYAESFPHTWQQHSVIATIPGQSNSTVVIGAHQDSINLFLPSILAAPGADDDGSGTVTIMEVFRALLNSKDVVDGKAPNTIEFHWYSAEEGGLLGSQAIFQSYEQSGRDIKAMLQQDMTGYVQKTLDAGQPESVGVITDFVDPGLTTFIKTVVEEYCNIPWVETKCGYACSDHASASKAGYPSAFVIESAFEYSDPHIHTTDDNIKYLSFDHMLEHARMTLGLVYELGFYDFSDSSEDRGDL.

Residues 1–18 (MKFSQASLLAACLPAISA) form the signal peptide. The propeptide occupies 19–82 (RFIETAEADN…LGSTRLNAQT (64 aa)). A glycan (N-linked (GlcNAc...) asparagine) is linked at N174. Positions 182, 201, 240, and 267 each coordinate Zn(2+). C316 and C320 are oxidised to a cystine. H349 is a Zn(2+) binding site.

This sequence belongs to the peptidase M28 family. M28E subfamily. Monomer. Zn(2+) is required as a cofactor.

It is found in the secreted. In terms of biological role, extracellular aminopeptidase that allows assimilation of proteinaceous substrates. This Fusarium vanettenii (strain ATCC MYA-4622 / CBS 123669 / FGSC 9596 / NRRL 45880 / 77-13-4) (Fusarium solani subsp. pisi) protein is Leucine aminopeptidase 1 (LAP1).